The sequence spans 263 residues: Oxidoreductase UcpA (263 aa).

Position 10–32 (10–32 (LITGASQGIGEGIARVFARHGAN)) interacts with NAD(+). S141 is a substrate binding site. Residue Y155 is the Proton acceptor of the active site.

Belongs to the short-chain dehydrogenases/reductases (SDR) family.

In Salmonella typhi, this protein is Oxidoreductase UcpA (ucpA).